A 585-amino-acid polypeptide reads, in one-letter code: MAGUK p55 subfamily member 3 (585 aa).

L27 domains are found at residues 6-60 and 61-118; these read EDSG…ERQS and PTPV…FDPV. Residues 137 to 218 enclose the PDZ domain; the sequence is IVRLVKNKEP…SITLKIIPAT (82 aa). The SH3 domain maps to 226–296; sequence ESKVFMRALF…PSKQFQERRL (71 aa). A Phosphoserine modification is found at serine 307. The Guanylate kinase-like domain occupies 385–570; the sequence is SRLVVLIGSL…VCSQLRAVIE (186 aa). The segment at 510–530 is disordered; the sequence is KRKTPPVSPDSEDPATPLDEQ.

The protein belongs to the MAGUK family. As to quaternary structure, interacts with HTR2C; this interaction stabilizes the receptor at the plasma membrane and prevents the desensitization of the HTR2C receptor-mediated calcium response. Interacts with HTR2A. Interacts with HTR4. Interacts (via PDZ domain) with CADM1 (via C-terminus)Interacts (via PDZ domain) with CADM1; this interaction connects CADM1 with DLG1. Interacts (via Guanylate kinase-like domain) with PALS1. Interacts with DLG1 (via N-terminus); this interaction connects CADM1 with DLG1 and links CADM1 with the regulatory subunit of phosphoinositide-3-kinase (PI3K) by forming a multiprotein complex and participates in cell spreading.

It localises to the apical cell membrane. It is found in the cell membrane. Its subcellular location is the cell junction. The protein resides in the adherens junction. Functionally, participates in cell spreading through the phosphoinositide-3-kinase (PI3K) pathway by connecting CADM1 to DLG1 and the regulatory subunit of phosphoinositide-3-kinase (PI3K). Stabilizes HTR2C at the plasma membrane and prevents its desensitization. May participates in the maintenance of adherens junctions. This Rattus norvegicus (Rat) protein is MAGUK p55 subfamily member 3.